The following is a 505-amino-acid chain: MAIPNIRIPCRQLFIDGEWREPLKKNRLPIINPANEEIIGYIPAATEEDVDMAVKAARSALRRDDWGSTTGAQRAKYLRAIAAKVLEKKPELATLETIDNGKPWFEAASDIDDVVACFEYYADLAEALDSKKQTEVKLHLDSFKTHVLREPLGVVGLITPWNYPLLMTTWKVAPALAAGCAAILKPSELASITSLELGEICREVGLPPGALSILTGLGHEAGSPLVSHPDVDKIAFTGSGPTGVKIMTAAAQLVKPVTLELGGKSPIVVFDDIHNLDTAVEWTLFGCFWTNGQICSATSRLIIQETIAPQFLARLLEWTKNIKISDPLEEDCKLGPVISRGQYEKILKFISTAKDEGATILYGGDRPEHLKKGYYIQPTIITDVDTSMEIWKEEVFGPVLCVKTFKIEEEAIELANDTKFGLGAAILSKDLERCERFTKAFQSGIVWINCSQPCFWQPPWGGKKRSGFGRELGEWSLENYLNIKQVTQYVTPDEPWAFYKSPSKL.

2 residues coordinate Na(+): isoleucine 31 and aspartate 99. Residues 159 to 161 and 185 to 188 contribute to the NAD(+) site; these read TPW and KPSE. Leucine 189 lines the Na(+) pocket. An NAD(+)-binding site is contributed by 238-242; the sequence is GSGPT. The Proton acceptor role is filled by glutamate 260. Leucine 261 is a binding site for NAD(+). Catalysis depends on cysteine 295, which acts as the Nucleophile. 2 residues coordinate NAD(+): glutamate 394 and tryptophan 460.

The protein belongs to the aldehyde dehydrogenase family. In terms of assembly, forms homodimers.

The catalysed reaction is 4-aminobutanal + NAD(+) + H2O = 4-aminobutanoate + NADH + 2 H(+). It carries out the reaction 3-aminopropanal + NAD(+) + H2O = beta-alanine + NADH + 2 H(+). The enzyme catalyses 4-(trimethylamino)butanal + NAD(+) + H2O = 4-(trimethylamino)butanoate + NADH + 2 H(+). It catalyses the reaction 4-guanidinobutanal + NAD(+) + H2O = 4-guanidinobutanoate + NADH + 2 H(+). Its pathway is amine and polyamine biosynthesis; betaine biosynthesis via choline pathway; betaine from betaine aldehyde: step 1/1. Its function is as follows. Dehydrogenase that catalyzes the oxidation of several aminoaldehydes. Metabolizes and detoxifies aldehyde products of polyamine degradation to non-toxic amino acids. Catalyzes the oxidation of 4-aminobutanal and 3-aminopropanal to 4-aminobutanoate and beta-alanine, respectively. Catalyzes the oxidation of 4-(trimethylamino)butanal and 4-guanidinobutanal to 4-trimethylammoniobutanoate and 4-guanidinobutanoate, respectively. This is Aminoaldehyde dehydrogenase 2 from Solanum lycopersicum (Tomato).